A 353-amino-acid chain; its full sequence is Photosystem II D2 protein (353 aa).

Residue T2 is modified to N-acetylthreonine. At T2 the chain carries Phosphothreonine. Residues 41 to 61 (CAYFALGGWFTGTTFVTSWYT) form a helical membrane-spanning segment. H118 is a chlorophyll a binding site. A helical transmembrane segment spans residues 125–141 (GFMLRQFELARSVQLRP). Residues Q130 and N143 each contribute to the pheophytin a site. Residues 153-166 (VFVSVFLIYPLGQS) traverse the membrane as a helical segment. H198 provides a ligand contact to chlorophyll a. The chain crosses the membrane as a helical span at residues 208 to 228 (AALLCAIHGATVENTLFEDGD). A plastoquinone-binding residues include H215 and F262. H215 serves as a coordination point for Fe cation. H269 serves as a coordination point for Fe cation. A helical transmembrane segment spans residues 279–295 (GLWMSALGVVGLALNLR).

The protein belongs to the reaction center PufL/M/PsbA/D family. PSII is composed of 1 copy each of membrane proteins PsbA, PsbB, PsbC, PsbD, PsbE, PsbF, PsbH, PsbI, PsbJ, PsbK, PsbL, PsbM, PsbT, PsbX, PsbY, PsbZ, Psb30/Ycf12, at least 3 peripheral proteins of the oxygen-evolving complex and a large number of cofactors. It forms dimeric complexes. Requires The D1/D2 heterodimer binds P680, chlorophylls that are the primary electron donor of PSII, and subsequent electron acceptors. It shares a non-heme iron and each subunit binds pheophytin, quinone, additional chlorophylls, carotenoids and lipids. There is also a Cl(-1) ion associated with D1 and D2, which is required for oxygen evolution. The PSII complex binds additional chlorophylls, carotenoids and specific lipids. as cofactor.

It is found in the plastid. The protein localises to the chloroplast thylakoid membrane. The enzyme catalyses 2 a plastoquinone + 4 hnu + 2 H2O = 2 a plastoquinol + O2. Functionally, photosystem II (PSII) is a light-driven water:plastoquinone oxidoreductase that uses light energy to abstract electrons from H(2)O, generating O(2) and a proton gradient subsequently used for ATP formation. It consists of a core antenna complex that captures photons, and an electron transfer chain that converts photonic excitation into a charge separation. The D1/D2 (PsbA/PsbD) reaction center heterodimer binds P680, the primary electron donor of PSII as well as several subsequent electron acceptors. D2 is needed for assembly of a stable PSII complex. This chain is Photosystem II D2 protein, found in Spinacia oleracea (Spinach).